We begin with the raw amino-acid sequence, 374 residues long: Nudix hydrolase 20, chloroplastic (374 aa).

The transit peptide at 1 to 49 (MASGFCSLALTVTTSLFSSHAITRRVLPILRWRSSSMSLSPLRHSRALS) directs the protein to the chloroplast. A Nudix hydrolase domain is found at 205-346 (GYGVHMNGYV…KANCSLVIID (142 aa)). A Nudix box motif is present at residues 244-265 (GGLPHGISCGGNLVKECEEEAG). Residues glutamate 259 and glutamate 263 each contribute to the Mg(2+) site.

The protein belongs to the Nudix hydrolase family. It depends on Mg(2+) as a cofactor. Requires Mn(2+) as cofactor. Expressed in leaves and inflorescences.

It is found in the plastid. The protein resides in the chloroplast. Its function is as follows. Probably mediates the hydrolysis of some nucleoside diphosphate derivatives. This chain is Nudix hydrolase 20, chloroplastic (NUDT20), found in Arabidopsis thaliana (Mouse-ear cress).